The primary structure comprises 77 residues: uncharacterized protein (77 aa).

The protein localises to the plastid. The protein resides in the cyanelle. This is an uncharacterized protein from Cyanophora paradoxa.